The primary structure comprises 847 residues: DNA ligase (847 aa).

Residues 1 to 22 (MSDTTTGSDAADAAVPATTPAD) show a composition bias toward low complexity. A disordered region spans residues 1–23 (MSDTTTGSDAADAAVPATTPADL). NAD(+) contacts are provided by residues 54-58 (DAEYD), 104-105 (SL), and Glu-135. Lys-137 acts as the N6-AMP-lysine intermediate in catalysis. 4 residues coordinate NAD(+): Arg-158, Glu-195, Lys-326, and Lys-350. 4 residues coordinate Zn(2+): Cys-444, Cys-447, Cys-463, and Cys-469. Residues 686–775 (AAGGVLAGLA…PDAIALPEAD (90 aa)) enclose the BRCT domain. A disordered region spans residues 770–847 (ALPEADPVPD…AEPDGPAETP (78 aa)). 2 stretches are compositionally biased toward low complexity: residues 786 to 807 (DGGS…ATAE) and 819 to 833 (PAAA…VEAG).

The protein belongs to the NAD-dependent DNA ligase family. LigA subfamily. The cofactor is Mg(2+). Mn(2+) is required as a cofactor.

It catalyses the reaction NAD(+) + (deoxyribonucleotide)n-3'-hydroxyl + 5'-phospho-(deoxyribonucleotide)m = (deoxyribonucleotide)n+m + AMP + beta-nicotinamide D-nucleotide.. In terms of biological role, DNA ligase that catalyzes the formation of phosphodiester linkages between 5'-phosphoryl and 3'-hydroxyl groups in double-stranded DNA using NAD as a coenzyme and as the energy source for the reaction. It is essential for DNA replication and repair of damaged DNA. This is DNA ligase from Clavibacter sepedonicus (Clavibacter michiganensis subsp. sepedonicus).